The following is a 162-amino-acid chain: ATP synthase subunit delta, mitochondrial (162 aa).

Residues 1-24 constitute a mitochondrion transit peptide; that stretch reads MFSVARTAIRGAARPAVRIARRGY.

In terms of assembly, F-type ATP synthases have 2 components, the catalytic core F(1) and the membrane-embedded component F(0), linked together by a central stalk and a peripheral stalk. The central stalk, also called rotor shaft, is often seen as part of F(1). The peripheral stalk is seen as part of F(0). F(0) contains the membrane channel next to the rotor. F-type ATP synthases form dimers but each monomer functions independently in ATP generation. The dimer consists of 17 different polypeptides: ATP1 (subunit alpha, 3 molecules per monomer, part of F(1)), ATP2 (subunit beta, 3 copies per monomer, part of F(1)), ATP3 (subunit gamma, part of the central stalk), ATP4 (subunit b, part of the peripheral stalk), ATP5/OSCP (subunit 5/OSCP, part of the peripheral stalk), ATP6 (subunit a, part of the peripheral stalk), ATP7 (subunit d, part of the peripheral stalk), ATP8 (subunit 8, part of the peripheral stalk), OLI1 (subunit c, part of the rotor, 10 molecules per monomer), ATP14 (subunit h, part of the peripheral stalk), ATP15 (subunit epsilon, part of the central stalk), ATP16 (subunit delta, part of the central stalk), ATP17 (subunit f, part of the peripheral stalk), ATP18 (subunit i/j, part of the peripheral stalk), ATP19 (subunit k, dimer-specific, at interface between monomers), ATP20 (subunit g, at interface between monomers), TIM11 (subunit e, at interface between monomers).

It is found in the mitochondrion inner membrane. Its function is as follows. Mitochondrial membrane ATP synthase (F(1)F(0) ATP synthase or Complex V) produces ATP from ADP in the presence of a proton gradient across the membrane which is generated by electron transport complexes of the respiratory chain. F-type ATP synthases consist of two structural domains, F(1) - containing the extramembraneous catalytic core, and F(0) - containing the membrane proton channel, linked together by a central stalk and a peripheral stalk. During catalysis, ATP synthesis in the catalytic domain of F(1) is coupled via a rotary mechanism of the central stalk subunits to proton translocation. Part of the complex F(1) domain and the central stalk which is part of the complex rotary element. Rotation of the central stalk against the surrounding alpha/ATP1(3)beta/ATP2(3) subunits leads to hydrolysis of ATP in three separate catalytic sites on the beta/ATP2 subunits. This chain is ATP synthase subunit delta, mitochondrial, found in Yarrowia lipolytica (strain CLIB 122 / E 150) (Yeast).